A 445-amino-acid polypeptide reads, in one-letter code: Pre-B-cell leukemia transcription factor 2 (445 aa).

Residues 13-44 (VGIPGLPIHGGPQTLTPHPMHEPPTDNGEPRK) form a disordered region. Over residues 31-44 (PMHEPPTDNGEPRK) the composition is skewed to basic and acidic residues. A PBC domain is found at 42–236 (PRKQDIGDIL…VMILRSRFLD (195 aa)). Residues 49–128 (DILQQIMTIT…EGVAGPEKGG (80 aa)) are PBC-A. The interval 131 to 236 (AAAAAAAAAS…VMILRSRFLD (106 aa)) is PBC-B. The segment at residues 237–299 (ARRKRRNFSK…NKRIRYKKNI (63 aa)) is a DNA-binding region (homeobox; TALE-type). The segment covering 319 to 332 (QGGHSGANSPTTPT) has biased composition (polar residues). The disordered stretch occupies residues 319–338 (QGGHSGANSPTTPTSAGSGG).

The protein belongs to the TALE/PBX homeobox family.

Its subcellular location is the nucleus. Transcriptional activator that binds the sequence 5'-ATCAATCAA-3'. This is Pre-B-cell leukemia transcription factor 2 (pbx2) from Xenopus laevis (African clawed frog).